The following is a 130-amino-acid chain: S-adenosylmethionine decarboxylase proenzyme (130 aa).

S66 acts as the Schiff-base intermediate with substrate; via pyruvic acid in catalysis. S66 bears the Pyruvic acid (Ser); by autocatalysis mark. H71 functions as the Proton acceptor; for processing activity in the catalytic mechanism. The Proton donor; for catalytic activity role is filled by C86.

This sequence belongs to the prokaryotic AdoMetDC family. Type 1 subfamily. Heterotetramer of two alpha and two beta chains arranged as a dimer of alpha/beta heterodimers. Pyruvate is required as a cofactor. In terms of processing, is synthesized initially as an inactive proenzyme. Formation of the active enzyme involves a self-maturation process in which the active site pyruvoyl group is generated from an internal serine residue via an autocatalytic post-translational modification. Two non-identical subunits are generated from the proenzyme in this reaction, and the pyruvate is formed at the N-terminus of the alpha chain, which is derived from the carboxyl end of the proenzyme. The post-translation cleavage follows an unusual pathway, termed non-hydrolytic serinolysis, in which the side chain hydroxyl group of the serine supplies its oxygen atom to form the C-terminus of the beta chain, while the remainder of the serine residue undergoes an oxidative deamination to produce ammonia and the pyruvoyl group blocking the N-terminus of the alpha chain.

The catalysed reaction is S-adenosyl-L-methionine + H(+) = S-adenosyl 3-(methylsulfanyl)propylamine + CO2. The protein operates within amine and polyamine biosynthesis; S-adenosylmethioninamine biosynthesis; S-adenosylmethioninamine from S-adenosyl-L-methionine: step 1/1. Functionally, catalyzes the decarboxylation of S-adenosylmethionine to S-adenosylmethioninamine (dcAdoMet), the propylamine donor required for the synthesis of the polyamines spermine and spermidine from the diamine putrescine. The sequence is that of S-adenosylmethionine decarboxylase proenzyme from Bacillus cytotoxicus (strain DSM 22905 / CIP 110041 / 391-98 / NVH 391-98).